We begin with the raw amino-acid sequence, 167 residues long: ATP synthase subunit b (167 aa).

Residues 7-25 (SFWLTISFVIFVYLIYRPA) form a helical membrane-spanning segment.

The protein belongs to the ATPase B chain family. F-type ATPases have 2 components, F(1) - the catalytic core - and F(0) - the membrane proton channel. F(1) has five subunits: alpha(3), beta(3), gamma(1), delta(1), epsilon(1). F(0) has three main subunits: a(1), b(2) and c(10-14). The alpha and beta chains form an alternating ring which encloses part of the gamma chain. F(1) is attached to F(0) by a central stalk formed by the gamma and epsilon chains, while a peripheral stalk is formed by the delta and b chains.

It is found in the cell inner membrane. In terms of biological role, f(1)F(0) ATP synthase produces ATP from ADP in the presence of a proton or sodium gradient. F-type ATPases consist of two structural domains, F(1) containing the extramembraneous catalytic core and F(0) containing the membrane proton channel, linked together by a central stalk and a peripheral stalk. During catalysis, ATP synthesis in the catalytic domain of F(1) is coupled via a rotary mechanism of the central stalk subunits to proton translocation. Component of the F(0) channel, it forms part of the peripheral stalk, linking F(1) to F(0). The protein is ATP synthase subunit b of Rickettsia prowazekii (strain Madrid E).